Consider the following 215-residue polypeptide: Probable GTP-binding protein EngB (215 aa).

An EngB-type G domain is found at 31-215 (GPPEIAFAGR…RAAILQAIAV (185 aa)). GTP is bound by residues 39 to 46 (GRSNVGKS), 66 to 70 (GRTQE), 93 to 96 (DMPG), 160 to 163 (TKSD), and 194 to 196 (TSS). Mg(2+) contacts are provided by serine 46 and threonine 68.

Belongs to the TRAFAC class TrmE-Era-EngA-EngB-Septin-like GTPase superfamily. EngB GTPase family. Mg(2+) serves as cofactor.

Its function is as follows. Necessary for normal cell division and for the maintenance of normal septation. This is Probable GTP-binding protein EngB from Bartonella quintana (strain Toulouse) (Rochalimaea quintana).